A 199-amino-acid chain; its full sequence is Calcium-binding protein CAST (199 aa).

Residues 1 to 13 are compositionally biased toward basic and acidic residues; that stretch reads MGSVQDENKDEFK. The segment at 1 to 31 is disordered; it reads MGSVQDENKDEFKQSLTRGKLKPSSSSSFRL. 4 EF-hand domains span residues 36 to 71, 75 to 110, 125 to 160, and 163 to 198; these read LNSI…LGLD, SEIE…VFFG, QDES…LGLP, and SEID…VIVP. Ca(2+) contacts are provided by Asp-49, Asn-51, Asp-53, and Glu-60. Ca(2+)-binding residues include Asp-138, Asn-140, Asp-142, Glu-149, Asp-178, Asp-180, Arg-182, and Glu-187.

In terms of biological role, not known. Probably binds 3 calcium ions. The protein is Calcium-binding protein CAST of Solanum tuberosum (Potato).